The chain runs to 242 residues: Probable transcriptional regulatory protein LSL_0422 (242 aa).

Residues methionine 1 to arginine 21 form a disordered region.

It belongs to the TACO1 family.

The protein localises to the cytoplasm. The sequence is that of Probable transcriptional regulatory protein LSL_0422 from Ligilactobacillus salivarius (strain UCC118) (Lactobacillus salivarius).